The chain runs to 356 residues: MTKIAFTGGGTVGHVSVNLSLIPTALSQGYEALYIGSKNGIEREMIESQLPEIKYYPISSGKLRRYISLENAKDVFKVLKGILDARKVLKKEKPDLLFSKGGFVSVPVVIAAKSLNIPTIIHESDLTPGLANKIALKFAKKIYTTFEETLNYLPKEKADFIGATIREDLKNGNAHNGYQLTGFNENKKVLLVMGGSLGSKKLNSIIRENLDALLQQYQVIHLTGKGLKDAQVKKSGYIQYEFVKEDLTDLLAITDTVISRAGSNAIYEFLTLRIPMLLVPLGLDQSRGDQIDNANHFADKGYAKTIDEEQLTAQILLQELNEMEQERTRIINNMKSYEQSYTKEALFDKMIKDALN.

Arg-166, Ser-196, and Gln-290 together coordinate UDP-N-acetyl-alpha-D-glucosamine.

It belongs to the glycosyltransferase 28 family. MurG subfamily.

It localises to the cell membrane. The catalysed reaction is Mur2Ac(oyl-L-Ala-gamma-D-Glu-L-Lys-D-Ala-D-Ala)-di-trans,octa-cis-undecaprenyl diphosphate + UDP-N-acetyl-alpha-D-glucosamine = beta-D-GlcNAc-(1-&gt;4)-Mur2Ac(oyl-L-Ala-gamma-D-Glu-L-Lys-D-Ala-D-Ala)-di-trans,octa-cis-undecaprenyl diphosphate + UDP + H(+). The protein operates within cell wall biogenesis; peptidoglycan biosynthesis. Cell wall formation. Catalyzes the transfer of a GlcNAc subunit on undecaprenyl-pyrophosphoryl-MurNAc-pentapeptide (lipid intermediate I) to form undecaprenyl-pyrophosphoryl-MurNAc-(pentapeptide)GlcNAc (lipid intermediate II). This chain is UDP-N-acetylglucosamine--N-acetylmuramyl-(pentapeptide) pyrophosphoryl-undecaprenol N-acetylglucosamine transferase, found in Staphylococcus aureus (strain Mu3 / ATCC 700698).